Consider the following 435-residue polypeptide: Glucan 1,3-beta-glucosidase (435 aa).

The signal sequence occupies residues Met1–Ala30. Glu222 acts as the Proton donor in catalysis. 2 disulfides stabilise this stretch: Cys306/Cys432 and Cys331/Cys357. The active-site Nucleophile is Glu323.

The protein belongs to the glycosyl hydrolase 5 (cellulase A) family.

It localises to the secreted. The catalysed reaction is Successive hydrolysis of beta-D-glucose units from the non-reducing ends of (1-&gt;3)-beta-D-glucans, releasing alpha-glucose.. Functionally, beta-glucanases participate in the metabolism of beta-glucan, the main structural component of the cell wall. It could also function biosynthetically as a transglycosylase. The sequence is that of Glucan 1,3-beta-glucosidase from Pichia angusta (Yeast).